A 387-amino-acid chain; its full sequence is 1-deoxy-D-xylulose 5-phosphate reductoisomerase (387 aa).

The NADPH site is built by Thr-11, Gly-12, Ser-13, Ile-14, Gly-37, Arg-38, Gln-39, and Asn-127. Lys-128 lines the 1-deoxy-D-xylulose 5-phosphate pocket. Glu-129 serves as a coordination point for NADPH. Asp-153 contacts Mn(2+). The 1-deoxy-D-xylulose 5-phosphate site is built by Ser-154, Glu-155, Ser-179, and His-200. Glu-155 lines the Mn(2+) pocket. Gly-206 lines the NADPH pocket. 1-deoxy-D-xylulose 5-phosphate-binding residues include Ser-213, Asn-218, Lys-219, and Glu-222. Position 222 (Glu-222) interacts with Mn(2+).

The protein belongs to the DXR family. It depends on Mg(2+) as a cofactor. Mn(2+) serves as cofactor.

It catalyses the reaction 2-C-methyl-D-erythritol 4-phosphate + NADP(+) = 1-deoxy-D-xylulose 5-phosphate + NADPH + H(+). It participates in isoprenoid biosynthesis; isopentenyl diphosphate biosynthesis via DXP pathway; isopentenyl diphosphate from 1-deoxy-D-xylulose 5-phosphate: step 1/6. In terms of biological role, catalyzes the NADPH-dependent rearrangement and reduction of 1-deoxy-D-xylulose-5-phosphate (DXP) to 2-C-methyl-D-erythritol 4-phosphate (MEP). The protein is 1-deoxy-D-xylulose 5-phosphate reductoisomerase of Symbiobacterium thermophilum (strain DSM 24528 / JCM 14929 / IAM 14863 / T).